Consider the following 331-residue polypeptide: Phenylalanine--tRNA ligase alpha subunit (331 aa).

Glu-252 provides a ligand contact to Mg(2+).

The protein belongs to the class-II aminoacyl-tRNA synthetase family. Phe-tRNA synthetase alpha subunit type 1 subfamily. In terms of assembly, tetramer of two alpha and two beta subunits. Requires Mg(2+) as cofactor.

Its subcellular location is the cytoplasm. The catalysed reaction is tRNA(Phe) + L-phenylalanine + ATP = L-phenylalanyl-tRNA(Phe) + AMP + diphosphate + H(+). The chain is Phenylalanine--tRNA ligase alpha subunit from Xanthomonas euvesicatoria pv. vesicatoria (strain 85-10) (Xanthomonas campestris pv. vesicatoria).